The sequence spans 405 residues: Tryptophan synthase beta chain (405 aa).

An N6-(pyridoxal phosphate)lysine modification is found at Lys98.

Belongs to the TrpB family. In terms of assembly, tetramer of two alpha and two beta chains. Pyridoxal 5'-phosphate serves as cofactor.

The catalysed reaction is (1S,2R)-1-C-(indol-3-yl)glycerol 3-phosphate + L-serine = D-glyceraldehyde 3-phosphate + L-tryptophan + H2O. It functions in the pathway amino-acid biosynthesis; L-tryptophan biosynthesis; L-tryptophan from chorismate: step 5/5. Functionally, the beta subunit is responsible for the synthesis of L-tryptophan from indole and L-serine. The sequence is that of Tryptophan synthase beta chain from Xanthomonas campestris pv. campestris (strain 8004).